A 37-amino-acid chain; its full sequence is Brevinin-2DYe (37 aa).

Cys-31 and Cys-37 form a disulfide bridge.

Expressed by the skin glands.

It localises to the secreted. Functionally, antimicrobial peptide. Active against the Gram-positive bacterium S.aureus (MIC=15 uM) and the Gram-negative bacterium E.coli (MIC=30 uM). This is Brevinin-2DYe from Rana dybowskii (Dybovsky's frog).